We begin with the raw amino-acid sequence, 104 residues long: Putative thioredoxin-4 (104 aa).

One can recognise a Thioredoxin domain in the interval 2-104; it reads SKVTNVSINT…QLRKILDSMK (103 aa). Residues Cys31 and Cys34 each act as nucleophile in the active site. Cysteines 31 and 34 form a disulfide.

The protein belongs to the thioredoxin family.

Its function is as follows. Participates in various redox reactions through the reversible oxidation of its active center dithiol to a disulfide and catalyzes dithiol-disulfide exchange reactions. This is Putative thioredoxin-4 (trxD) from Dictyostelium discoideum (Social amoeba).